Here is a 495-residue protein sequence, read N- to C-terminus: Aspartyl/glutamyl-tRNA(Asn/Gln) amidotransferase subunit B (495 aa).

The protein belongs to the GatB/GatE family. GatB subfamily. As to quaternary structure, heterotrimer of A, B and C subunits.

The catalysed reaction is L-glutamyl-tRNA(Gln) + L-glutamine + ATP + H2O = L-glutaminyl-tRNA(Gln) + L-glutamate + ADP + phosphate + H(+). The enzyme catalyses L-aspartyl-tRNA(Asn) + L-glutamine + ATP + H2O = L-asparaginyl-tRNA(Asn) + L-glutamate + ADP + phosphate + 2 H(+). Allows the formation of correctly charged Asn-tRNA(Asn) or Gln-tRNA(Gln) through the transamidation of misacylated Asp-tRNA(Asn) or Glu-tRNA(Gln) in organisms which lack either or both of asparaginyl-tRNA or glutaminyl-tRNA synthetases. The reaction takes place in the presence of glutamine and ATP through an activated phospho-Asp-tRNA(Asn) or phospho-Glu-tRNA(Gln). In Methanosarcina acetivorans (strain ATCC 35395 / DSM 2834 / JCM 12185 / C2A), this protein is Aspartyl/glutamyl-tRNA(Asn/Gln) amidotransferase subunit B.